The chain runs to 865 residues: DNA mismatch repair protein MutS (865 aa).

Residue 609–616 (GPNMAGKS) participates in ATP binding.

The protein belongs to the DNA mismatch repair MutS family.

Functionally, this protein is involved in the repair of mismatches in DNA. It is possible that it carries out the mismatch recognition step. This protein has a weak ATPase activity. This is DNA mismatch repair protein MutS from Leuconostoc citreum (strain KM20).